We begin with the raw amino-acid sequence, 374 residues long: Aminomethyltransferase (374 aa).

It belongs to the GcvT family. In terms of assembly, the glycine cleavage system is composed of four proteins: P, T, L and H.

The enzyme catalyses N(6)-[(R)-S(8)-aminomethyldihydrolipoyl]-L-lysyl-[protein] + (6S)-5,6,7,8-tetrahydrofolate = N(6)-[(R)-dihydrolipoyl]-L-lysyl-[protein] + (6R)-5,10-methylene-5,6,7,8-tetrahydrofolate + NH4(+). The glycine cleavage system catalyzes the degradation of glycine. The chain is Aminomethyltransferase from Prochlorococcus marinus (strain MIT 9313).